Consider the following 374-residue polypeptide: PqqA peptide cyclase (374 aa).

The Radical SAM core domain maps to Ile4–Asp224. [4Fe-4S] cluster is bound by residues Cys18, Cys22, and Cys25.

It belongs to the radical SAM superfamily. PqqE family. Interacts with PqqD. The interaction is necessary for activity of PqqE. The cofactor is [4Fe-4S] cluster.

The catalysed reaction is [PQQ precursor protein] + S-adenosyl-L-methionine = E-Y cross-linked-[PQQ precursor protein] + 5'-deoxyadenosine + L-methionine + H(+). It functions in the pathway cofactor biosynthesis; pyrroloquinoline quinone biosynthesis. Functionally, catalyzes the cross-linking of a glutamate residue and a tyrosine residue in the PqqA protein as part of the biosynthesis of pyrroloquinoline quinone (PQQ). The protein is PqqA peptide cyclase of Granulibacter bethesdensis (strain ATCC BAA-1260 / CGDNIH1).